Here is a 523-residue protein sequence, read N- to C-terminus: Ubiquitin carboxyl-terminal hydrolase 22-A (523 aa).

A UBP-type zinc finger spans residues 4–121 (AGCSHVNSFK…KEEQRKAWKL (118 aa)). Residues Cys-6, His-8, Cys-46, Cys-49, Cys-59, Cys-62, Cys-67, His-72, His-76, His-82, Cys-95, and Cys-98 each contribute to the Zn(2+) site. A USP domain is found at 174–518 (RGLINLGNTC…EGYLLFYHKQ (345 aa)). Catalysis depends on Cys-183, which acts as the Nucleophile. Catalysis depends on His-477, which acts as the Proton acceptor.

This sequence belongs to the peptidase C19 family. UBP8 subfamily. Component of some SAGA transcription coactivator-HAT complexes.

Its subcellular location is the nucleus. The enzyme catalyses Thiol-dependent hydrolysis of ester, thioester, amide, peptide and isopeptide bonds formed by the C-terminal Gly of ubiquitin (a 76-residue protein attached to proteins as an intracellular targeting signal).. Histone deubiquitinating component of the transcription regulatory histone acetylation (HAT) complex SAGA. Catalyzes the deubiquitination of both histones H2A and H2B, thereby acting as a coactivator. Recruited to specific gene promoters by activators, where it is required for transcription. The chain is Ubiquitin carboxyl-terminal hydrolase 22-A (usp22-a) from Xenopus laevis (African clawed frog).